A 445-amino-acid chain; its full sequence is Phosphoglucosamine mutase (445 aa).

Serine 102 functions as the Phosphoserine intermediate in the catalytic mechanism. Residues serine 102, aspartate 241, aspartate 243, and aspartate 245 each coordinate Mg(2+). Serine 102 is modified (phosphoserine).

It belongs to the phosphohexose mutase family. The cofactor is Mg(2+). Activated by phosphorylation.

The catalysed reaction is alpha-D-glucosamine 1-phosphate = D-glucosamine 6-phosphate. In terms of biological role, catalyzes the conversion of glucosamine-6-phosphate to glucosamine-1-phosphate. In Escherichia coli (strain 55989 / EAEC), this protein is Phosphoglucosamine mutase.